Reading from the N-terminus, the 1166-residue chain is ATP-dependent helicase/deoxyribonuclease subunit B (1166 aa).

The region spanning 1-290 is the UvrD-like helicase ATP-binding domain; it reads MGMRFILGRS…DTLEGNFQNR (290 aa). 8 to 15 contributes to the ATP binding site; it reads GRSGTNKS. The UvrD-like helicase C-terminal domain occupies 283 to 588; that stretch reads LEGNFQNRPY…QFSHVPPSMD (306 aa). Positions 802, 1123, 1126, and 1132 each coordinate [4Fe-4S] cluster.

Belongs to the helicase family. AddB/RexB type 1 subfamily. As to quaternary structure, heterodimer of AddA and AddB. Requires Mg(2+) as cofactor. It depends on [4Fe-4S] cluster as a cofactor.

In terms of biological role, the heterodimer acts as both an ATP-dependent DNA helicase and an ATP-dependent, dual-direction single-stranded exonuclease. Recognizes the chi site generating a DNA molecule suitable for the initiation of homologous recombination. The AddB subunit has 5' -&gt; 3' nuclease activity but not helicase activity. This chain is ATP-dependent helicase/deoxyribonuclease subunit B, found in Oceanobacillus iheyensis (strain DSM 14371 / CIP 107618 / JCM 11309 / KCTC 3954 / HTE831).